The following is a 206-amino-acid chain: MIRATRVLGQHRWTEAAADSVLLDFDDRHRRRLAMTGTRGLAFVLDLAHATALRGGDALVLEDGRLVEVVAAAEPLLEIRASDPHHLVRLAWHLGNRHLPTQIMAKSLRIRRDHVIEAMVKGLGARVIEIEAPFDPEGGAYAEPSHAQGHDEHDHHHGHDHHHDHGGHEHAHHGHDHGHAHDDHVHDEHCGHGHHHHGHAHAHDRK.

The segment at Pro136–Lys206 is disordered. Basic and acidic residues-rich tracts occupy residues Gln148–Glu169 and His177–Gly191. A compositionally biased stretch (basic residues) spans His192–Lys206.

The protein belongs to the UreE family.

The protein localises to the cytoplasm. Involved in urease metallocenter assembly. Binds nickel. Probably functions as a nickel donor during metallocenter assembly. This chain is Urease accessory protein UreE, found in Bradyrhizobium sp. (strain BTAi1 / ATCC BAA-1182).